The following is a 469-amino-acid chain: MAKTLYEKLFDAHVVYEAAGETPILYINRHLIHEVTSPQAFDGLRVAGRQVRQIGKTFGTMDHSISTQVRDVNKLEGQAKIQVLELAKNCEANGISLFDMQTKEQGIVHVMGPEQGLTLPGMTIVCGDSHTATHGAFGALAFGIGTSEVEHVLATQTLKQARAKSMKVEVRGKVNPGITAKDIVLAIIGKTTMAGGTGHVVEFCGEAIRDLSMEGRMTVCNMAIEFGAKAGLVAPDETTFAYLKGRPHAPKGKDWDDAVEYWKTLKSDDDAVFDSVVVLEAKDIAPQVTWGTNPGQVIGIDQVVPNPQEMADPVTKASAEKALAYIGLDANTDMKNIPVDQVFIGSCTNSRIEDLRAAAAVMKGRKKADNVKRVLVVPGSGLVKEQAEKEGLDKIFIEAGAEWRNPGCSMCLGMNDDRLGEWERCASTSNRNFEGRQGRNGRTHLVSPAMAAAAAMFGKFVDIRHVELN.

[4Fe-4S] cluster is bound by residues cysteine 347, cysteine 408, and cysteine 411.

The protein belongs to the aconitase/IPM isomerase family. LeuC type 1 subfamily. In terms of assembly, heterodimer of LeuC and LeuD. [4Fe-4S] cluster serves as cofactor.

The catalysed reaction is (2R,3S)-3-isopropylmalate = (2S)-2-isopropylmalate. It participates in amino-acid biosynthesis; L-leucine biosynthesis; L-leucine from 3-methyl-2-oxobutanoate: step 2/4. Its function is as follows. Catalyzes the isomerization between 2-isopropylmalate and 3-isopropylmalate, via the formation of 2-isopropylmaleate. This chain is 3-isopropylmalate dehydratase large subunit, found in Actinobacillus pleuropneumoniae serotype 7 (strain AP76).